Here is an 805-residue protein sequence, read N- to C-terminus: Rho GTPase-activating protein 42 (805 aa).

Residues 7-262 (EFSDSFLDSP…IRSAEQDFKA (256 aa)) form the BAR domain. Residues 225–262 (KQQLQFNLQNTRNNFESTRQEVENLMRRIRSAEQDFKA) are a coiled coil. Residues 265 to 374 (QWTMEGFLYV…WMEAMDGKEP (110 aa)) form the PH domain. A Rho-GAP domain is found at 376–572 (YTLPALLSKK…ILIENYDKIF (197 aa)). 3 disordered regions span residues 576–600 (PDPNVPLPHPQSHSQSRGGARRSKA), 625–725 (SDTF…SELL), and 765–805 (VSRS…PGSV). The segment covering 626 to 654 (DTFSSSPSSTPMGSMESLSSHSSEQNSCS) has biased composition (low complexity). The span at 670–693 (LCWTTPSPSTNGPKSPACTTSPDS) shows a compositional bias: polar residues. A compositionally biased stretch (basic and acidic residues) spans 694 to 704 (SSKEDANKTDG). Polar residues predominate over residues 710 to 721 (LSTSPGDRSSPA). Over residues 782–793 (PPKDGMRFRDDS) the composition is skewed to basic and acidic residues.

May influence blood pressure by functioning as a GTPase-activating protein in vascular smooth muscle. This is Rho GTPase-activating protein 42 from Danio rerio (Zebrafish).